Reading from the N-terminus, the 269-residue chain is Signal recognition particle receptor subunit beta (269 aa).

A helical membrane pass occupies residues 35–55; it reads LLSVAVALLAVLLTLVFWKFI. GTP is bound by residues 69 to 77 and 90 to 93; these read GLCDSGKTL and TQTS. Position 110 is a phosphoserine (serine 110). Residues glycine 118 and 178–181 each bind GTP; that span reads NKQD. Threonine 212 is subject to Phosphothreonine. Alanine 246 serves as a coordination point for GTP.

This sequence belongs to the SRP receptor beta subunit family. Heterodimer with SRPRA.

It localises to the endoplasmic reticulum membrane. Component of the SRP (signal recognition particle) receptor. Ensures, in conjunction with the signal recognition particle, the correct targeting of the nascent secretory proteins to the endoplasmic reticulum membrane system. May mediate the membrane association of SR. This is Signal recognition particle receptor subunit beta (Srprb) from Mus musculus (Mouse).